A 229-amino-acid polypeptide reads, in one-letter code: Auxin-responsive protein IAA17 (229 aa).

The short motif at 14–18 (LCLGL) is the EAR-like (transcriptional repression) element. In terms of domain architecture, PB1 spans 110-211 (AAFVKVSMDG…TCKRLRLMKG (102 aa)).

The protein belongs to the Aux/IAA family. Homodimers and heterodimers. Interacts with the auxin response factors ARF1 and IAA24. Interacts with IAA1. Interacts with TPL. Interacts (via PB1 domain) with ARF7 (via PB1 domain). Phosphorylated by phytochrome A in vitro.

The protein resides in the nucleus. In terms of biological role, aux/IAA proteins are short-lived transcriptional factors that function as repressors of early auxin response genes at low auxin concentrations. Repression is thought to result from the interaction with auxin response factors (ARFs), proteins that bind to the auxin-responsive promoter element (AuxRE). Formation of heterodimers with ARF proteins may alter their ability to modulate early auxin response genes expression. This Arabidopsis thaliana (Mouse-ear cress) protein is Auxin-responsive protein IAA17 (IAA17).